A 447-amino-acid chain; its full sequence is NADP-specific glutamate dehydrogenase (447 aa).

Substrate-binding residues include lysine 92, glutamine 113, and lysine 116. Lysine 128 serves as the catalytic Proton donor. Substrate is bound at residue glycine 167. NADP(+) is bound by residues threonine 212 and asparagine 243. Serine 379 is a substrate binding site.

It belongs to the Glu/Leu/Phe/Val dehydrogenases family. In terms of assembly, homohexamer.

The catalysed reaction is L-glutamate + NADP(+) + H2O = 2-oxoglutarate + NH4(+) + NADPH + H(+). Functionally, catalyzes the reversible oxidative deamination of glutamate to alpha-ketoglutarate and ammonia. This chain is NADP-specific glutamate dehydrogenase (gdh), found in Corynebacterium glutamicum (strain ATCC 13032 / DSM 20300 / JCM 1318 / BCRC 11384 / CCUG 27702 / LMG 3730 / NBRC 12168 / NCIMB 10025 / NRRL B-2784 / 534).